The sequence spans 546 residues: CTP synthase (546 aa).

An amidoligase domain region spans residues 1–266 (MTTNYIFVTG…DDLVCTRFGI (266 aa)). Residue serine 14 participates in CTP binding. Residue serine 14 coordinates UTP. Residues 15–20 (SLGKGI) and aspartate 72 contribute to the ATP site. Mg(2+)-binding residues include aspartate 72 and glutamate 140. CTP is bound by residues 147–149 (DIE), 187–192 (KTKPTQ), and lysine 223. UTP-binding positions include 187–192 (KTKPTQ) and lysine 223. 239 to 241 (KDV) provides a ligand contact to ATP. A Glutamine amidotransferase type-1 domain is found at 291–542 (TIGMVGKYIE…VKAAGQYSRG (252 aa)). L-glutamine is bound at residue glycine 352. Catalysis depends on cysteine 379, which acts as the Nucleophile; for glutamine hydrolysis. Residues 380 to 383 (LGMQ), glutamate 403, and arginine 470 contribute to the L-glutamine site. Residues histidine 515 and glutamate 517 contribute to the active site.

The protein belongs to the CTP synthase family. Homotetramer.

It catalyses the reaction UTP + L-glutamine + ATP + H2O = CTP + L-glutamate + ADP + phosphate + 2 H(+). The enzyme catalyses L-glutamine + H2O = L-glutamate + NH4(+). The catalysed reaction is UTP + NH4(+) + ATP = CTP + ADP + phosphate + 2 H(+). It participates in pyrimidine metabolism; CTP biosynthesis via de novo pathway; CTP from UDP: step 2/2. Allosterically activated by GTP, when glutamine is the substrate; GTP has no effect on the reaction when ammonia is the substrate. The allosteric effector GTP functions by stabilizing the protein conformation that binds the tetrahedral intermediate(s) formed during glutamine hydrolysis. Inhibited by the product CTP, via allosteric rather than competitive inhibition. Its function is as follows. Catalyzes the ATP-dependent amination of UTP to CTP with either L-glutamine or ammonia as the source of nitrogen. Regulates intracellular CTP levels through interactions with the four ribonucleotide triphosphates. The sequence is that of CTP synthase from Vibrio parahaemolyticus serotype O3:K6 (strain RIMD 2210633).